The sequence spans 427 residues: L-rhamnose isomerase (427 aa).

Residues H264, D296, and D298 each coordinate Mn(2+).

It belongs to the rhamnose isomerase family. The cofactor is Mn(2+).

The protein resides in the cytoplasm. It catalyses the reaction L-rhamnopyranose = L-rhamnulose. It participates in carbohydrate degradation; L-rhamnose degradation; glycerone phosphate from L-rhamnose: step 1/3. In terms of biological role, catalyzes the interconversion of L-rhamnose and L-rhamnulose. The sequence is that of L-rhamnose isomerase from Rhodopirellula baltica (strain DSM 10527 / NCIMB 13988 / SH1).